The chain runs to 128 residues: uncharacterized protein (128 aa).

The next 3 helical transmembrane spans lie at 30 to 50 (ILFTILSVAIIMVAFDSLGSS), 65 to 85 (VFRGNTAKGIAVVGIIVLGIQ), and 93 to 113 (WEVALVVVTAIIILFKAPDIV).

It localises to the cell membrane. This is an uncharacterized protein from Rickettsia prowazekii (strain Madrid E).